Reading from the N-terminus, the 875-residue chain is Alanine--tRNA ligase (875 aa).

His-564, His-568, Cys-666, and His-670 together coordinate Zn(2+).

The protein belongs to the class-II aminoacyl-tRNA synthetase family. In terms of assembly, homotetramer. Requires Zn(2+) as cofactor.

It localises to the cytoplasm. The enzyme catalyses tRNA(Ala) + L-alanine + ATP = L-alanyl-tRNA(Ala) + AMP + diphosphate. In terms of biological role, catalyzes the attachment of alanine to tRNA(Ala) in a two-step reaction: alanine is first activated by ATP to form Ala-AMP and then transferred to the acceptor end of tRNA(Ala). Also edits incorrectly charged Ser-tRNA(Ala) and Gly-tRNA(Ala) via its editing domain. The chain is Alanine--tRNA ligase from Yersinia pseudotuberculosis serotype O:1b (strain IP 31758).